The following is a 293-amino-acid chain: Elongation factor Ts (293 aa).

An involved in Mg(2+) ion dislocation from EF-Tu region spans residues 80 to 83; the sequence is TDFV.

The protein belongs to the EF-Ts family.

It localises to the cytoplasm. In terms of biological role, associates with the EF-Tu.GDP complex and induces the exchange of GDP to GTP. It remains bound to the aminoacyl-tRNA.EF-Tu.GTP complex up to the GTP hydrolysis stage on the ribosome. This is Elongation factor Ts from Aeromonas salmonicida (strain A449).